The following is a 1188-amino-acid chain: Carboxylic acid reductase (1188 aa).

AMP contacts are provided by residues His315, Ser408, 429–430 (DG), Thr434, Asp507, 519–522 (YVDR), Lys528, and Lys629. The region spanning 665 to 743 (AGERPVIETV…SVAAHIEKER (79 aa)) is the Carrier domain. Ser702 carries the post-translational modification O-(pantetheine 4'-phosphoryl)serine. NADP(+)-binding positions include 801–804 (NGWL), Arg828, Arg838, 868–869 (DF), 894–896 (SGA), Ser934, Tyr970, Lys974, and Ser997.

The protein belongs to the ATP-dependent AMP-binding enzyme family. Carboxylic acid reductase subfamily. Pantetheine 4'-phosphate serves as cofactor.

It catalyses the reaction a carboxylate + ATP + NADPH + H(+) = an aldehyde + AMP + diphosphate + NADP(+). Catalyzes the ATP- and NADPH-dependent reduction of carboxylic acids to the corresponding aldehydes. Catalyzes the reduction of a very wide range of carboxylic acids, including benzoic acids, heterocyclic, phenylacetic, phenylpropanoic and fatty acid substrates. In Segniliparus rugosus (strain ATCC BAA-974 / DSM 45345 / CCUG 50838 / CIP 108380 / JCM 13579 / CDC 945), this protein is Carboxylic acid reductase.